Reading from the N-terminus, the 291-residue chain is Cell division control protein 2 homolog 1 (291 aa).

Positions 1-284 (GENVEKIGEG…ARSAVEHEYF (284 aa)) constitute a Protein kinase domain. ATP contacts are provided by residues 7-15 (IGEGTYGVV) and Lys30. Thr11 carries the phosphothreonine modification. Tyr12 is subject to Phosphotyrosine. The active-site Proton acceptor is the Asp124. Thr158 is subject to Phosphothreonine; by CAK.

Belongs to the protein kinase superfamily. CMGC Ser/Thr protein kinase family. CDC2/CDKX subfamily. Found in most organs including root, young leaf, stem, vegetative meristem and flower bud.

The enzyme catalyses L-seryl-[protein] + ATP = O-phospho-L-seryl-[protein] + ADP + H(+). The catalysed reaction is L-threonyl-[protein] + ATP = O-phospho-L-threonyl-[protein] + ADP + H(+). It catalyses the reaction [DNA-directed RNA polymerase] + ATP = phospho-[DNA-directed RNA polymerase] + ADP + H(+). Its activity is regulated as follows. Phosphorylation at Thr-11 or Tyr-12 inactivates the enzyme, while phosphorylation at Thr-158 activates it. Its function is as follows. Plays a key role in the control of the eukaryotic cell cycle. Component of the kinase complex that phosphorylates the repetitive C-terminus of RNA polymerase II. This is Cell division control protein 2 homolog 1 (CDC2A) from Medicago sativa (Alfalfa).